Consider the following 717-residue polypeptide: Catalase-peroxidase (717 aa).

Positions 1 to 20 are disordered; it reads MSGKCPVMHGGNTSTGTSNK. The segment covering 11-20 has biased composition (polar residues); the sequence is GNTSTGTSNK. The tryptophyl-tyrosyl-methioninium (Trp-Tyr) (with M-245) cross-link spans 91–219; sequence WHSAGSYRLA…LAAVQMGLIY (129 aa). The active-site Proton acceptor is His-92. The tryptophyl-tyrosyl-methioninium (Tyr-Met) (with W-91) cross-link spans 219–245; it reads YVNPEGVNGQPDPQKTAEQVRETFARM. Residue His-260 participates in heme b binding.

Belongs to the peroxidase family. Peroxidase/catalase subfamily. In terms of assembly, homodimer or homotetramer. Heme b is required as a cofactor. Formation of the three residue Trp-Tyr-Met cross-link is important for the catalase, but not the peroxidase activity of the enzyme.

It catalyses the reaction H2O2 + AH2 = A + 2 H2O. The catalysed reaction is 2 H2O2 = O2 + 2 H2O. Its function is as follows. Bifunctional enzyme with both catalase and broad-spectrum peroxidase activity. The sequence is that of Catalase-peroxidase from Chromohalobacter salexigens (strain ATCC BAA-138 / DSM 3043 / CIP 106854 / NCIMB 13768 / 1H11).